Consider the following 474-residue polypeptide: tRNA-2-methylthio-N(6)-dimethylallyladenosine synthase (474 aa).

Positions 3–120 (KKLHIKTWGC…LPEMINSVRG (118 aa)) constitute an MTTase N-terminal domain. Cys-12, Cys-49, Cys-83, Cys-157, Cys-161, and Cys-164 together coordinate [4Fe-4S] cluster. Residues 143–375 (RAEGPTAFVS…QERINQQAMA (233 aa)) form the Radical SAM core domain. The region spanning 378-441 (RRMLGTTQRI…PNSLRGKVVR (64 aa)) is the TRAM domain.

This sequence belongs to the methylthiotransferase family. MiaB subfamily. As to quaternary structure, monomer. [4Fe-4S] cluster is required as a cofactor.

The protein localises to the cytoplasm. The catalysed reaction is N(6)-dimethylallyladenosine(37) in tRNA + (sulfur carrier)-SH + AH2 + 2 S-adenosyl-L-methionine = 2-methylsulfanyl-N(6)-dimethylallyladenosine(37) in tRNA + (sulfur carrier)-H + 5'-deoxyadenosine + L-methionine + A + S-adenosyl-L-homocysteine + 2 H(+). Its function is as follows. Catalyzes the methylthiolation of N6-(dimethylallyl)adenosine (i(6)A), leading to the formation of 2-methylthio-N6-(dimethylallyl)adenosine (ms(2)i(6)A) at position 37 in tRNAs that read codons beginning with uridine. This is tRNA-2-methylthio-N(6)-dimethylallyladenosine synthase from Salmonella paratyphi A (strain ATCC 9150 / SARB42).